The chain runs to 126 residues: Phosphoribosyl-AMP cyclohydrolase (126 aa).

Aspartate 82 serves as a coordination point for Mg(2+). Residue cysteine 83 participates in Zn(2+) binding. Mg(2+) is bound by residues aspartate 84 and aspartate 86. The Zn(2+) site is built by cysteine 99 and cysteine 106.

Belongs to the PRA-CH family. As to quaternary structure, homodimer. Mg(2+) is required as a cofactor. Zn(2+) serves as cofactor.

It localises to the cytoplasm. The enzyme catalyses 1-(5-phospho-beta-D-ribosyl)-5'-AMP + H2O = 1-(5-phospho-beta-D-ribosyl)-5-[(5-phospho-beta-D-ribosylamino)methylideneamino]imidazole-4-carboxamide. The protein operates within amino-acid biosynthesis; L-histidine biosynthesis; L-histidine from 5-phospho-alpha-D-ribose 1-diphosphate: step 3/9. In terms of biological role, catalyzes the hydrolysis of the adenine ring of phosphoribosyl-AMP. This Micrococcus luteus (strain ATCC 4698 / DSM 20030 / JCM 1464 / CCM 169 / CCUG 5858 / IAM 1056 / NBRC 3333 / NCIMB 9278 / NCTC 2665 / VKM Ac-2230) (Micrococcus lysodeikticus) protein is Phosphoribosyl-AMP cyclohydrolase.